A 156-amino-acid chain; its full sequence is Small ribosomal subunit protein uS7 (156 aa).

It belongs to the universal ribosomal protein uS7 family. Part of the 30S ribosomal subunit. Contacts proteins S9 and S11.

Functionally, one of the primary rRNA binding proteins, it binds directly to 16S rRNA where it nucleates assembly of the head domain of the 30S subunit. Is located at the subunit interface close to the decoding center, probably blocks exit of the E-site tRNA. This chain is Small ribosomal subunit protein uS7, found in Prochlorococcus marinus (strain MIT 9301).